The following is a 290-amino-acid chain: Type II secretion system protein C (290 aa).

Residues 1–28 (MTLPFRNDLLSSLLARCKTVPLSRFSQP) lie on the Cytoplasmic side of the membrane. A helical transmembrane segment spans residues 29–46 (LFWLLLLLLAHQCAGLTW). Topologically, residues 47–290 (RLLDLGSQQA…LYDVYVGLSE (244 aa)) are periplasmic.

This sequence belongs to the GSP C family.

The protein resides in the cell inner membrane. Involved in a type II secretion system (T2SS, formerly general secretion pathway, GSP) for the export of proteins. This chain is Type II secretion system protein C (exeC), found in Aeromonas hydrophila.